A 73-amino-acid chain; its full sequence is Large ribosomal subunit protein bL31 (73 aa).

It belongs to the bacterial ribosomal protein bL31 family. Type A subfamily. Part of the 50S ribosomal subunit.

Binds the 23S rRNA. The protein is Large ribosomal subunit protein bL31 of Chelativorans sp. (strain BNC1).